The primary structure comprises 343 residues: MRVDDFDYELPPELIAQEPLDRRDATRLMTVDRLKGEVGEVSFREITRLFRPGDLLVVNDTRVIPARFFGVKESGGRVEVFLERRLAAVGERWQCLLRSSKPSRPGTRIVLAEGVSAEVIGRSDGDTWCVSFTPVTGFDEWLERNGAMPLPPYIRRSAADADRERYQTVFSRQRGAVAAPTAGLHFTPELLDELRERGVEIATLTLHVGLGTFMPIRVERVEEHRMHRERYIIPSATADAVNARKGGKGRVIALGTTTCRTLEHAARDDGRVAAGAGETGIFIYPGYHFKTVDALITNFHLPKSTLLMLVSAFAGKELLFRAYHEAVTRRFRFFSYGDAMFVH.

Belongs to the QueA family. As to quaternary structure, monomer.

It is found in the cytoplasm. It carries out the reaction 7-aminomethyl-7-carbaguanosine(34) in tRNA + S-adenosyl-L-methionine = epoxyqueuosine(34) in tRNA + adenine + L-methionine + 2 H(+). It functions in the pathway tRNA modification; tRNA-queuosine biosynthesis. In terms of biological role, transfers and isomerizes the ribose moiety from AdoMet to the 7-aminomethyl group of 7-deazaguanine (preQ1-tRNA) to give epoxyqueuosine (oQ-tRNA). This is S-adenosylmethionine:tRNA ribosyltransferase-isomerase from Geobacter metallireducens (strain ATCC 53774 / DSM 7210 / GS-15).